The primary structure comprises 124 residues: Large ribosomal subunit protein uL22 (124 aa).

It belongs to the universal ribosomal protein uL22 family. As to quaternary structure, part of the 50S ribosomal subunit.

Its function is as follows. This protein binds specifically to 23S rRNA; its binding is stimulated by other ribosomal proteins, e.g. L4, L17, and L20. It is important during the early stages of 50S assembly. It makes multiple contacts with different domains of the 23S rRNA in the assembled 50S subunit and ribosome. In terms of biological role, the globular domain of the protein is located near the polypeptide exit tunnel on the outside of the subunit, while an extended beta-hairpin is found that lines the wall of the exit tunnel in the center of the 70S ribosome. This is Large ribosomal subunit protein uL22 from Buchnera aphidicola subsp. Cinara cedri (strain Cc).